The following is a 1032-amino-acid chain: Integrin alpha-4 (1032 aa).

Residues 1-34 (MIRDLGKVGKVSLLLDHIWTGILLYTVILTPADC) form the signal peptide. Over 35 to 974 (YNIDESSPML…LHNLKPKKHV (940 aa)) the chain is Extracellular. FG-GAP repeat units follow at residues 36 to 100 (NIDE…PNRT), 113 to 177 (KCGK…TELS), 186 to 237 (DHVR…TIKS), 238 to 291 (YVDL…EKQL), 292 to 351 (TILF…GAME), 353 to 411 (LKFE…GITP), and 415 to 477 (QRLQ…LPST). Asn81 and Asn98 each carry an N-linked (GlcNAc...) asparagine glycan. Intrachain disulfides connect Cys91-Cys101, Cys144-Cys165, and Cys183-Cys198. A glycan (N-linked (GlcNAc...) asparagine) is linked at Asn229. Residues Asp314, Asn316, Asp318, Leu320, Asp322, Asp376, Asp378, Asp380, Asp384, Asp438, Asp440, Asn442, Tyr444, and Asp446 each contribute to the Ca(2+) site. N-linked (GlcNAc...) asparagine glycosylation is present at Asn479. Cys485 and Cys494 are disulfide-bonded. Residues Asn496, Asn517, Asn537, Asn626, and Asn660 are each glycosylated (N-linked (GlcNAc...) asparagine). 2 cysteine pairs are disulfide-bonded: Cys500-Cys556 and Cys622-Cys627. The cysteines at positions 698 and 712 are disulfide-linked. Residues Asn746 and Asn857 are each glycosylated (N-linked (GlcNAc...) asparagine). Intrachain disulfides connect Cys853–Cys889 and Cys896–Cys901. The helical transmembrane segment at 975-998 (IYMIIGISLLLGILLFSLLTYILW) threads the bilayer. The Cytoplasmic portion of the chain corresponds to 999–1032 (KVGFFRRKYQPIGTEETSRRESWNYLNKDEKEVK). A GFFKR motif motif is present at residues 1001–1005 (GFFRR).

The protein belongs to the integrin alpha chain family. Heterodimer of an alpha and a beta subunit.

The protein resides in the membrane. Fibronectin and V-CAM adhesion receptor. This Xenopus laevis (African clawed frog) protein is Integrin alpha-4 (itga4).